A 103-amino-acid polypeptide reads, in one-letter code: Large ribosomal subunit protein bL21 (103 aa).

The protein belongs to the bacterial ribosomal protein bL21 family. As to quaternary structure, part of the 50S ribosomal subunit. Contacts protein L20.

This protein binds to 23S rRNA in the presence of protein L20. The sequence is that of Large ribosomal subunit protein bL21 from Salmonella agona (strain SL483).